We begin with the raw amino-acid sequence, 215 residues long: Pyrrolidone-carboxylate peptidase (215 aa).

Residues Glu80, Cys143, and His167 contribute to the active site.

The protein belongs to the peptidase C15 family. In terms of assembly, homotetramer.

The protein localises to the cytoplasm. It catalyses the reaction Release of an N-terminal pyroglutamyl group from a polypeptide, the second amino acid generally not being Pro.. In terms of biological role, removes 5-oxoproline from various penultimate amino acid residues except L-proline. The sequence is that of Pyrrolidone-carboxylate peptidase from Pectobacterium carotovorum subsp. carotovorum (strain PC1).